The sequence spans 263 residues: ATP synthase subunit delta (263 aa).

It belongs to the ATPase delta chain family. As to quaternary structure, F-type ATPases have 2 components, F(1) - the catalytic core - and F(0) - the membrane proton channel. F(1) has five subunits: alpha(3), beta(3), gamma(1), delta(1), epsilon(1). F(0) has three main subunits: a(1), b(2) and c(10-14). The alpha and beta chains form an alternating ring which encloses part of the gamma chain. F(1) is attached to F(0) by a central stalk formed by the gamma and epsilon chains, while a peripheral stalk is formed by the delta and b chains.

Its subcellular location is the cell membrane. Its function is as follows. F(1)F(0) ATP synthase produces ATP from ADP in the presence of a proton or sodium gradient. F-type ATPases consist of two structural domains, F(1) containing the extramembraneous catalytic core and F(0) containing the membrane proton channel, linked together by a central stalk and a peripheral stalk. During catalysis, ATP synthesis in the catalytic domain of F(1) is coupled via a rotary mechanism of the central stalk subunits to proton translocation. In terms of biological role, this protein is part of the stalk that links CF(0) to CF(1). It either transmits conformational changes from CF(0) to CF(1) or is implicated in proton conduction. The chain is ATP synthase subunit delta from Cutibacterium acnes (strain DSM 16379 / KPA171202) (Propionibacterium acnes).